The sequence spans 220 residues: Chloramphenicol acetyltransferase (220 aa).

Residue H187 is the Proton acceptor of the active site.

Belongs to the chloramphenicol acetyltransferase family. In terms of assembly, homotrimer.

It catalyses the reaction chloramphenicol + acetyl-CoA = chloramphenicol 3-acetate + CoA. Its function is as follows. This enzyme is an effector of chloramphenicol resistance in bacteria. This chain is Chloramphenicol acetyltransferase (cat86), found in Bacillus pumilus (Bacillus mesentericus).